The primary structure comprises 247 residues: Carboxy-S-adenosyl-L-methionine synthase (247 aa).

Residues Tyr-40, 65–67 (GAS), 90–91 (DN), 122–123 (DI), Asn-137, and Arg-204 contribute to the S-adenosyl-L-methionine site.

Belongs to the class I-like SAM-binding methyltransferase superfamily. Cx-SAM synthase family. In terms of assembly, homodimer.

The enzyme catalyses prephenate + S-adenosyl-L-methionine = carboxy-S-adenosyl-L-methionine + 3-phenylpyruvate + H2O. In terms of biological role, catalyzes the conversion of S-adenosyl-L-methionine (SAM) to carboxy-S-adenosyl-L-methionine (Cx-SAM). This chain is Carboxy-S-adenosyl-L-methionine synthase, found in Pseudomonas entomophila (strain L48).